Here is a 295-residue protein sequence, read N- to C-terminus: Acetylglutamate kinase (295 aa).

Substrate is bound by residues 70–71 (GG), R92, and N191.

It belongs to the acetylglutamate kinase family. ArgB subfamily.

Its subcellular location is the cytoplasm. The catalysed reaction is N-acetyl-L-glutamate + ATP = N-acetyl-L-glutamyl 5-phosphate + ADP. Its pathway is amino-acid biosynthesis; L-arginine biosynthesis; N(2)-acetyl-L-ornithine from L-glutamate: step 2/4. Functionally, catalyzes the ATP-dependent phosphorylation of N-acetyl-L-glutamate. This is Acetylglutamate kinase from Mycolicibacterium paratuberculosis (strain ATCC BAA-968 / K-10) (Mycobacterium paratuberculosis).